The sequence spans 491 residues: Probable cobyric acid synthase (491 aa).

In terms of domain architecture, GATase cobBQ-type spans 252–444 (PVEVNIVKFS…LHGILENFEF (193 aa)). The active-site Nucleophile is the Cys-330. His-436 is a catalytic residue.

It belongs to the CobB/CobQ family. CobQ subfamily.

The protein operates within cofactor biosynthesis; adenosylcobalamin biosynthesis. In terms of biological role, catalyzes amidations at positions B, D, E, and G on adenosylcobyrinic A,C-diamide. NH(2) groups are provided by glutamine, and one molecule of ATP is hydrogenolyzed for each amidation. This is Probable cobyric acid synthase from Methanococcus vannielii (strain ATCC 35089 / DSM 1224 / JCM 13029 / OCM 148 / SB).